The following is a 538-amino-acid chain: Nicotinate phosphoribosyltransferase (538 aa).

Residues tyrosine 21 and threonine 210 each contribute to the nicotinate site. The residue at position 213 (histidine 213) is a Phosphohistidine. A nicotinate-binding site is contributed by arginine 318. Threonine 380 serves as a coordination point for 5-phospho-alpha-D-ribose 1-diphosphate.

It belongs to the NAPRTase family. In terms of assembly, homodimer. Mg(2+) serves as cofactor. Mn(2+) is required as a cofactor. Transiently phosphorylated on a His residue during the reaction cycle. Phosphorylation strongly increases the affinity for substrates and increases the rate of nicotinate D-ribonucleotide production. Dephosphorylation regenerates the low-affinity form of the enzyme, leading to product release.

It is found in the cytoplasm. It localises to the cytosol. The catalysed reaction is nicotinate + 5-phospho-alpha-D-ribose 1-diphosphate + ATP + H2O = nicotinate beta-D-ribonucleotide + ADP + phosphate + diphosphate. Its pathway is cofactor biosynthesis; NAD(+) biosynthesis; nicotinate D-ribonucleotide from nicotinate: step 1/1. In terms of biological role, catalyzes the first step in the biosynthesis of NAD from nicotinic acid, the ATP-dependent synthesis of beta-nicotinate D-ribonucleotide from nicotinate and 5-phospho-D-ribose 1-phosphate. Helps prevent cellular oxidative stress via its role in NAD biosynthesis. The sequence is that of Nicotinate phosphoribosyltransferase (Naprt) from Rattus norvegicus (Rat).